A 61-amino-acid chain; its full sequence is Transcription elongation factor Spt4 (61 aa).

Residues Cys-6, Cys-9, Cys-18, and Cys-21 each coordinate Zn(2+).

The protein belongs to the archaeal Spt4 family. In terms of assembly, heterodimer composed of Spt4 and Spt5.

In terms of biological role, stimulates transcription elongation. This Pyrococcus furiosus (strain ATCC 43587 / DSM 3638 / JCM 8422 / Vc1) protein is Transcription elongation factor Spt4.